We begin with the raw amino-acid sequence, 217 residues long: Peptidyl-tRNA hydrolase (217 aa).

Y14 lines the tRNA pocket. H19 functions as the Proton acceptor in the catalytic mechanism. Residues Y64, N66, and N113 each contribute to the tRNA site. The tract at residues 182-217 is disordered; it reads MNRINAPPPKPKREQKRSSDAPDSSSDTNTSNASDG. A compositionally biased stretch (low complexity) spans 202 to 217; sequence APDSSSDTNTSNASDG.

This sequence belongs to the PTH family. In terms of assembly, monomer.

Its subcellular location is the cytoplasm. The catalysed reaction is an N-acyl-L-alpha-aminoacyl-tRNA + H2O = an N-acyl-L-amino acid + a tRNA + H(+). In terms of biological role, hydrolyzes ribosome-free peptidyl-tRNAs (with 1 or more amino acids incorporated), which drop off the ribosome during protein synthesis, or as a result of ribosome stalling. Functionally, catalyzes the release of premature peptidyl moieties from peptidyl-tRNA molecules trapped in stalled 50S ribosomal subunits, and thus maintains levels of free tRNAs and 50S ribosomes. This Roseiflexus sp. (strain RS-1) protein is Peptidyl-tRNA hydrolase.